The chain runs to 313 residues: Arabinooligosaccharides transport system permease protein AraP (313 aa).

6 consecutive transmembrane segments (helical) span residues 39-59 (FVLS…IMSF), 91-111 (LEYT…LAIF), 126-146 (ALFI…RLIF), 176-196 (MFLM…LYFL), 224-244 (ITLP…IIGG), and 281-301 (MGYG…VSLI). Residues 87–302 (LWNTLEYTFW…IVILVVSLIS (216 aa)) enclose the ABC transmembrane type-1 domain.

The protein belongs to the binding-protein-dependent transport system permease family. MalFG subfamily. As to quaternary structure, the complex is composed of two ATP-binding proteins (MsmX), two transmembrane proteins (AraP and AraQ) and a solute-binding protein (AraN).

It localises to the cell membrane. Part of the ABC transporter complex AraNPQ involved in the uptake of arabinooligosaccharides. Transports alpha-1,5-arabinooligosaccharides, at least up to four L-arabinosyl units. Responsible for the translocation of the substrate across the membrane. The sequence is that of Arabinooligosaccharides transport system permease protein AraP from Bacillus subtilis (strain 168).